Consider the following 397-residue polypeptide: Succinyl-diaminopimelate desuccinylase (397 aa).

His73 lines the Zn(2+) pocket. Asp75 is an active-site residue. A Zn(2+)-binding site is contributed by Asp106. Residue Glu140 is the Proton acceptor of the active site. Residues Glu141, Glu169, and His366 each contribute to the Zn(2+) site.

The protein belongs to the peptidase M20A family. DapE subfamily. As to quaternary structure, homodimer. Zn(2+) is required as a cofactor. Requires Co(2+) as cofactor.

It carries out the reaction N-succinyl-(2S,6S)-2,6-diaminopimelate + H2O = (2S,6S)-2,6-diaminopimelate + succinate. Its pathway is amino-acid biosynthesis; L-lysine biosynthesis via DAP pathway; LL-2,6-diaminopimelate from (S)-tetrahydrodipicolinate (succinylase route): step 3/3. Catalyzes the hydrolysis of N-succinyl-L,L-diaminopimelic acid (SDAP), forming succinate and LL-2,6-diaminopimelate (DAP), an intermediate involved in the bacterial biosynthesis of lysine and meso-diaminopimelic acid, an essential component of bacterial cell walls. This Rhizobium rhizogenes (strain K84 / ATCC BAA-868) (Agrobacterium radiobacter) protein is Succinyl-diaminopimelate desuccinylase.